Here is a 336-residue protein sequence, read N- to C-terminus: Serpentine receptor class beta-15 (336 aa).

7 consecutive transmembrane segments (helical) span residues 24 to 44 (LFIH…FVIF), 57 to 77 (FLFS…AIIS), 109 to 129 (IFMS…FIAM), 142 to 162 (LGPI…FFIY), 186 to 206 (FTFF…NSYL), 237 to 257 (VFVV…IMIL), and 276 to 296 (GAFT…AVYL).

The protein belongs to the nematode receptor-like protein srb family.

Its subcellular location is the membrane. This Caenorhabditis elegans protein is Serpentine receptor class beta-15 (srb-15).